We begin with the raw amino-acid sequence, 548 residues long: Multidrug efflux system permease protein Rv1217c (548 aa).

12 helical membrane passes run 39–59 (VSLP…YIAS), 99–119 (GIWK…LTVI), 148–168 (ALLL…LGLL), 178–198 (VAFG…AAVA), 210–230 (AVAF…DAGS), 253–273 (WWVL…AYRL), 313–333 (LLWT…VHGI), 359–379 (AFLA…AVSL), 410–430 (LAMA…AAGL), 450–470 (AAVQ…LFGL), 477–497 (VAWG…LAGF), and 521–541 (VPLL…AMAF).

In terms of assembly, the complex is probably composed of two ATP-binding proteins (Rv1218c) and a transmembrane protein (Rv1217c).

The protein localises to the cell inner membrane. Probably part of the ABC transporter complex Rv1217c-Rv1218c involved in the resistance to a wide range of structurally unrelated drugs. Probably responsible for the translocation of the substrate across the membrane. This is Multidrug efflux system permease protein Rv1217c from Mycobacterium tuberculosis (strain ATCC 25618 / H37Rv).